The following is a 151-amino-acid chain: RNA polymerase-binding transcription factor DksA (151 aa).

The stretch at 33–54 (NEAQLAHFRRILEAWRNQLRDE) forms a coiled coil. Zn(2+) contacts are provided by Cys-114, Cys-117, Cys-135, and Cys-138. Residues 114-138 (CESCGVEIGIRRLEARPTADLCIDC) form a dksA C4-type zinc finger.

It belongs to the DksA family. In terms of assembly, interacts directly with the RNA polymerase.

The protein localises to the cytoplasm. Its function is as follows. Transcription factor that acts by binding directly to the RNA polymerase (RNAP). Required for negative regulation of rRNA expression and positive regulation of several amino acid biosynthesis promoters. Also required for regulation of fis expression. The protein is RNA polymerase-binding transcription factor DksA of Escherichia coli O157:H7.